Reading from the N-terminus, the 315-residue chain is NAD-dependent protein deacylase sirtuin-5, mitochondrial (315 aa).

Residues 1-39 constitute a mitochondrion transit peptide; the sequence is MSLLHFATRRLILQVLRELGLKAPPVHKTLKICIAMSRP. The Deacetylase sirtuin-type domain occupies 40-312; sequence SSNMADFRRF…PEALSPHESE (273 aa). 61-80 provides a ligand contact to NAD(+); that stretch reads GAGVSAESGVPTFRGPGGFW. Residues Y105 and R108 each contribute to the substrate site. NAD(+) is bound at residue 143–146; the sequence is QNID. H161 serves as the catalytic Proton acceptor. NAD(+) contacts are provided by residues 254–256, 280–282, and C298; these read GTS and NTV.

The protein belongs to the sirtuin family. Class III subfamily. As to quaternary structure, monomer. Homodimer. Interacts with CPS1.

Its subcellular location is the mitochondrion. The protein resides in the cytoplasm. The protein localises to the cytosol. It is found in the nucleus. The enzyme catalyses N(6)-malonyl-L-lysyl-[protein] + NAD(+) + H2O = 2''-O-malonyl-ADP-D-ribose + nicotinamide + L-lysyl-[protein]. It carries out the reaction N(6)-succinyl-L-lysyl-[protein] + NAD(+) + H2O = 2''-O-succinyl-ADP-D-ribose + nicotinamide + L-lysyl-[protein]. It catalyses the reaction N(6)-glutaryl-L-lysyl-[protein] + NAD(+) + H2O = 2''-O-glutaryl-ADP-D-ribose + nicotinamide + L-lysyl-[protein]. NAD-dependent lysine demalonylase, desuccinylase and deglutarylase that specifically removes malonyl, succinyl and glutaryl groups on target proteins. Activates CPS1 and contributes to the regulation of blood ammonia levels during prolonged fasting: acts by mediating desuccinylation and deglutarylation of CPS1, thereby increasing CPS1 activity in response to elevated NAD levels during fasting. Activates SOD1 by mediating its desuccinylation, leading to reduced reactive oxygen species. Activates SHMT2 by mediating its desuccinylation. Modulates ketogenesis through the desuccinylation and activation of HMGCS2. Has weak NAD-dependent protein deacetylase activity; however this activity may not be physiologically relevant in vivo. Can deacetylate cytochrome c (CYCS) and a number of other proteins in vitro such as UOX. The protein is NAD-dependent protein deacylase sirtuin-5, mitochondrial of Monodelphis domestica (Gray short-tailed opossum).